The sequence spans 75 residues: Small ribosomal subunit protein bS18 (75 aa).

Belongs to the bacterial ribosomal protein bS18 family. As to quaternary structure, part of the 30S ribosomal subunit. Forms a tight heterodimer with protein bS6.

Binds as a heterodimer with protein bS6 to the central domain of the 16S rRNA, where it helps stabilize the platform of the 30S subunit. This Acinetobacter baylyi (strain ATCC 33305 / BD413 / ADP1) protein is Small ribosomal subunit protein bS18.